The primary structure comprises 336 residues: Glycerol-3-phosphate dehydrogenase [NAD(P)+] (336 aa).

Positions 16, 17, 37, and 111 each coordinate NADPH. Positions 111, 140, and 142 each coordinate sn-glycerol 3-phosphate. Residue alanine 144 coordinates NADPH. The sn-glycerol 3-phosphate site is built by lysine 196, aspartate 249, serine 259, arginine 260, and asparagine 261. Catalysis depends on lysine 196, which acts as the Proton acceptor. Arginine 260 is an NADPH binding site. NADPH-binding residues include valine 284 and glutamate 286.

The protein belongs to the NAD-dependent glycerol-3-phosphate dehydrogenase family.

It is found in the cytoplasm. The enzyme catalyses sn-glycerol 3-phosphate + NAD(+) = dihydroxyacetone phosphate + NADH + H(+). It catalyses the reaction sn-glycerol 3-phosphate + NADP(+) = dihydroxyacetone phosphate + NADPH + H(+). It participates in membrane lipid metabolism; glycerophospholipid metabolism. Catalyzes the reduction of the glycolytic intermediate dihydroxyacetone phosphate (DHAP) to sn-glycerol 3-phosphate (G3P), the key precursor for phospholipid synthesis. This is Glycerol-3-phosphate dehydrogenase [NAD(P)+] from Glaesserella parasuis serovar 5 (strain SH0165) (Haemophilus parasuis).